The following is a 260-amino-acid chain: Adenosylcobinamide-GDP ribazoletransferase (260 aa).

A run of 6 helical transmembrane segments spans residues 40 to 60 (AFPFAGLLIGFVPAVTLLLLL), 64 to 84 (TDPLVAALVALSVQALVTGAL), 117 to 137 (YGAIALILSFAIRAAALAAII), 142 to 162 (PLAAALAIPAVAALSRGAIAW), 188 to 208 (HFALVSAGLLAALLIWPPFGL), and 210 to 230 (PLVAGLLVAGVAGFAFTVFIR).

This sequence belongs to the CobS family. The cofactor is Mg(2+).

The protein localises to the cell inner membrane. It carries out the reaction alpha-ribazole + adenosylcob(III)inamide-GDP = adenosylcob(III)alamin + GMP + H(+). The enzyme catalyses alpha-ribazole 5'-phosphate + adenosylcob(III)inamide-GDP = adenosylcob(III)alamin 5'-phosphate + GMP + H(+). It participates in cofactor biosynthesis; adenosylcobalamin biosynthesis; adenosylcobalamin from cob(II)yrinate a,c-diamide: step 7/7. Joins adenosylcobinamide-GDP and alpha-ribazole to generate adenosylcobalamin (Ado-cobalamin). Also synthesizes adenosylcobalamin 5'-phosphate from adenosylcobinamide-GDP and alpha-ribazole 5'-phosphate. The polypeptide is Adenosylcobinamide-GDP ribazoletransferase (Rhizobium etli (strain ATCC 51251 / DSM 11541 / JCM 21823 / NBRC 15573 / CFN 42)).